Here is a 651-residue protein sequence, read N- to C-terminus: Methionine--tRNA ligase (651 aa).

A 'HIGH' region motif is present at residues 10 to 20; that stretch reads AYTNGPLHLGH. Residues Cys142, Cys145, Cys154, and Cys157 each coordinate Zn(2+). The 'KMSKS' region signature appears at 320–324; that stretch reads KMSTS. Thr323 contacts ATP. Positions 550 to 651 constitute a tRNA-binding domain; that stretch reads YLEKIDLRVG…KDIKAGSKVR (102 aa).

The protein belongs to the class-I aminoacyl-tRNA synthetase family. MetG type 1 subfamily. In terms of assembly, homodimer. Zn(2+) serves as cofactor.

The protein localises to the cytoplasm. It carries out the reaction tRNA(Met) + L-methionine + ATP = L-methionyl-tRNA(Met) + AMP + diphosphate. Functionally, is required not only for elongation of protein synthesis but also for the initiation of all mRNA translation through initiator tRNA(fMet) aminoacylation. This Methanocaldococcus jannaschii (strain ATCC 43067 / DSM 2661 / JAL-1 / JCM 10045 / NBRC 100440) (Methanococcus jannaschii) protein is Methionine--tRNA ligase.